The chain runs to 551 residues: Mesoderm induction early response protein 3 (551 aa).

The span at 1 to 16 (MAEASFGSSSPVGSLS) shows a compositional bias: low complexity. 2 disordered regions span residues 1–62 (MAEA…EKEG) and 113–169 (LSGD…GNSP). Over residues 17–36 (SEDHDFDPTAEMLVHDYDDE) the composition is skewed to basic and acidic residues. Serine 52, serine 53, and serine 114 each carry phosphoserine. Residues 121–134 (QSSADDLTPSVTSH) show a composition bias toward polar residues. Over residues 154-163 (KESEIEDVET) the composition is skewed to acidic residues. Serine 156 carries the post-translational modification Phosphoserine. Phosphothreonine is present on threonine 163. Phosphoserine occurs at positions 165 and 168. Positions 174–273 (REIMIGLEYQ…EAIERYCCNG (100 aa)) constitute an ELM2 domain. The SANT domain occupies 278 to 330 (EGMTAWTEEECRSFEHALMLHGKDFHLIQKDKVRSRTVAECVAFYYMWKKSER).

The protein resides in the nucleus. Functionally, transcriptional repressor. The protein is Mesoderm induction early response protein 3 (Mier3) of Mus musculus (Mouse).